The following is a 49-amino-acid chain: Thymopoietin-1 (49 aa).

The LEM-like domain maps to 4–47 (LEDPSVLTKEKLKSELVANNVTLPAGEQRKDVYVELYLQHLTAL). Positions 32 to 36 (RKDVY) are biological activity.

It belongs to the thymopoietin family.

Hormone of the thymus with pleiotropic actions on prothymocytes, mature T-cells, the nicotinic acetylcholine receptor, and pituitary corticotrophs. The polypeptide is Thymopoietin-1 (Bos taurus (Bovine)).